Consider the following 217-residue polypeptide: Outer-membrane lipoprotein LolB (217 aa).

The signal sequence occupies residues 1–20 (MSKALRTLALSGLVLVGLSA). C21 is lipidated: N-palmitoyl cysteine. Residue C21 is the site of S-diacylglycerol cysteine attachment.

It belongs to the LolB family. As to quaternary structure, monomer.

Its subcellular location is the cell outer membrane. Functionally, plays a critical role in the incorporation of lipoproteins in the outer membrane after they are released by the LolA protein. The protein is Outer-membrane lipoprotein LolB of Xanthomonas oryzae pv. oryzae (strain MAFF 311018).